The primary structure comprises 220 residues: Ribonuclease HII (220 aa).

An RNase H type-2 domain is found at 32–220; it reads KHIAGIDEAG…FAPIKGCFDC (189 aa). A divalent metal cation is bound by residues aspartate 38, glutamate 39, and aspartate 130.

This sequence belongs to the RNase HII family. Mn(2+) serves as cofactor. It depends on Mg(2+) as a cofactor.

The protein localises to the cytoplasm. The catalysed reaction is Endonucleolytic cleavage to 5'-phosphomonoester.. Its function is as follows. Endonuclease that specifically degrades the RNA of RNA-DNA hybrids. This chain is Ribonuclease HII, found in Brucella abortus (strain 2308).